The following is a 169-amino-acid chain: Large ribosomal subunit protein uL10 (169 aa).

Belongs to the universal ribosomal protein uL10 family. In terms of assembly, part of the ribosomal stalk of the 50S ribosomal subunit. The N-terminus interacts with L11 and the large rRNA to form the base of the stalk. The C-terminus forms an elongated spine to which L12 dimers bind in a sequential fashion forming a multimeric L10(L12)X complex.

Functionally, forms part of the ribosomal stalk, playing a central role in the interaction of the ribosome with GTP-bound translation factors. This Rickettsia akari (strain Hartford) protein is Large ribosomal subunit protein uL10.